Reading from the N-terminus, the 298-residue chain is Bifunctional protein FolD (298 aa).

Residues 165–167 (GRS), serine 190, and isoleucine 231 each bind NADP(+).

The protein belongs to the tetrahydrofolate dehydrogenase/cyclohydrolase family. Homodimer.

It carries out the reaction (6R)-5,10-methylene-5,6,7,8-tetrahydrofolate + NADP(+) = (6R)-5,10-methenyltetrahydrofolate + NADPH. The enzyme catalyses (6R)-5,10-methenyltetrahydrofolate + H2O = (6R)-10-formyltetrahydrofolate + H(+). The protein operates within one-carbon metabolism; tetrahydrofolate interconversion. Functionally, catalyzes the oxidation of 5,10-methylenetetrahydrofolate to 5,10-methenyltetrahydrofolate and then the hydrolysis of 5,10-methenyltetrahydrofolate to 10-formyltetrahydrofolate. The sequence is that of Bifunctional protein FolD from Prochlorococcus marinus subsp. pastoris (strain CCMP1986 / NIES-2087 / MED4).